The chain runs to 419 residues: Acetyl transferase GW6a (419 aa).

Positions Val12–Pro210 constitute an N-acetyltransferase domain. Residues Val44 to Lys68 form a disordered region. The span at Glu58–Lys68 shows a compositional bias: basic residues.

The protein belongs to the acetyltransferase family. Interacts (via C-terminus) with HDR3 (via N-terminus). In terms of processing, ubiquitinated at Lys-63 by HDR3. Polyubiquitination of GW6A delays its degradation by the 26S proteasome and enhances GW6A histone acetyltransferase activity. As to expression, expressed in roots, leaf blades, leaf sheaths, shoot apical meristem and young panicles.

It localises to the nucleus. Functionally, possesses intrinsic histone acetyltransferase activity and acts as a positive regulator of grain weight, hull size, yield, and plant biomass. Regulates postitively grain weight and yield by enlarging spikelet hulls via increasing cell number and accelerating grain filling. In vitro, catalyzes the acetylation of histone H4 at Lys-6 (H4K5ac), Lys-13 (H4K12ac) and Lys-17 (H4K16ac). Involved in the regulation of plastochron (the time interval between leaf initiation event). This chain is Acetyl transferase GW6a, found in Oryza sativa subsp. japonica (Rice).